The primary structure comprises 582 residues: MTQINFNASYTSASTPSRASFDNSYSEFCDKQPNDYLSYYNHPTPDGADTVISDSETAAASNFLASVNSLTDNDLVECLLKTTDNLEEAVSSAYYSESLEQPVVEQPSPSSAYHAESFEHSAGVNQPSATGTKRKLDEYLDNSQGVVGQFNKIKLRPKYKKSTIQSCATLEQTINHNTNICTVASTQEITHYFTNDFAPYLMRFDDNDYNSNRFSDHMSETGYYMFVVKKSEVKPFEIIFAKYVSNVVYEYTNNYYMVDNRVFVVTFDKIRFMISYNLVKETGIEIPHSQDVCNDETAAQNCKKCHFVDVHHTFKAALTSYFNLDMYYAQTTFVTLLQSLGERKCGFLLSKLYEMYQDKNLFTLPIMLSRKESNEIETASNNFFVSPYVSQILKYSESVQFPDNPPNKYVVDNLNLIVNKKSTLTYKYSSVANLLFNNYKYHDNIASNNNAENLKKVKKEDGSMHIVEQYLTQNVDNVKGHNFIVLSFKNEERLTIAKKNKEFYWISGEIKDVDVSQVIQKYNRFKHHMFVIGKVNRRESTTLHNNLLKLLALILQGLVPLSDAITFAEQKLNCKYKKFEFN.

The segment at 101 to 131 (QPVVEQPSPSSAYHAESFEHSAGVNQPSATG) is disordered.

Belongs to the nucleopolyhedrovirus IE-1 protein family. As to quaternary structure, homodimer. Interacts with helicase and LEF-3. In terms of processing, phosphorylated.

It is found in the host nucleus. In terms of biological role, regulatory transcriptional protein, which trans-activates gene expression from early baculovirus promoters. Can also trans-activate its own promoter, suggesting an autoregulation during infection of host cells. Also promotes viral DNA genome replication via the N-terminal region. This Autographa californica nuclear polyhedrosis virus (AcMNPV) protein is Trans-activating transcriptional regulatory protein (IE1).